A 212-amino-acid polypeptide reads, in one-letter code: UPF0111 protein PH1389 (212 aa).

This sequence belongs to the UPF0111 family.

This is UPF0111 protein PH1389 from Pyrococcus horikoshii (strain ATCC 700860 / DSM 12428 / JCM 9974 / NBRC 100139 / OT-3).